Here is a 460-residue protein sequence, read N- to C-terminus: Probable carboxypeptidase ARB_01041 (460 aa).

A signal peptide spans 1–22 (MQKTYIWALVSLLASSLVDARS). Asn-98 carries N-linked (GlcNAc...) asparagine glycosylation. Asp-175 serves as a coordination point for Zn(2+). The Proton acceptor role is filled by Glu-207. Glu-208 provides a ligand contact to Zn(2+). A glycan (N-linked (GlcNAc...) asparagine) is linked at Asn-395.

This sequence belongs to the peptidase M20A family. Zn(2+) serves as cofactor.

Its subcellular location is the secreted. This Arthroderma benhamiae (strain ATCC MYA-4681 / CBS 112371) (Trichophyton mentagrophytes) protein is Probable carboxypeptidase ARB_01041.